The primary structure comprises 544 residues: Protein adenylyltransferase (544 aa).

The 154-residue stretch at 63–216 (FDTAYLCHIH…LEPMQHLFED (154 aa)) folds into the Fido domain. ATP-binding positions include 93 to 94 (FA), 106 to 107 (RT), 163 to 167 (EGNGR), and R170.

The protein localises to the secreted. It catalyses the reaction L-tyrosyl-[protein] + ATP = O-(5'-adenylyl)-L-tyrosyl-[protein] + diphosphate. It carries out the reaction L-threonyl-[protein] + ATP = 3-O-(5'-adenylyl)-L-threonyl-[protein] + diphosphate. Functionally, adenylyltransferase involved in virulence by mediating the addition of adenosine 5'-monophosphate (AMP) to specific residue of host target proteins. The protein is Protein adenylyltransferase (bepA) of Bartonella henselae (strain ATCC 49882 / DSM 28221 / CCUG 30454 / Houston 1) (Rochalimaea henselae).